The chain runs to 194 residues: Peptidyl-tRNA hydrolase (194 aa).

Position 16 (tyrosine 16) interacts with tRNA. The active-site Proton acceptor is the histidine 21. Positions 67, 69, and 115 each coordinate tRNA.

The protein belongs to the PTH family. In terms of assembly, monomer.

It is found in the cytoplasm. The enzyme catalyses an N-acyl-L-alpha-aminoacyl-tRNA + H2O = an N-acyl-L-amino acid + a tRNA + H(+). Its function is as follows. Hydrolyzes ribosome-free peptidyl-tRNAs (with 1 or more amino acids incorporated), which drop off the ribosome during protein synthesis, or as a result of ribosome stalling. In terms of biological role, catalyzes the release of premature peptidyl moieties from peptidyl-tRNA molecules trapped in stalled 50S ribosomal subunits, and thus maintains levels of free tRNAs and 50S ribosomes. In Salmonella dublin (strain CT_02021853), this protein is Peptidyl-tRNA hydrolase.